The primary structure comprises 64 residues: UPF0370 protein YE1145 (64 aa).

The chain crosses the membrane as a helical span at residues 3 to 23 (WLADYWWVVLIILVGMILNGI). The disordered stretch occupies residues 36 to 64 (SNKPEIPPHRDNNAQWDDDDDWPDKDKKK).

Belongs to the UPF0370 family.

The protein localises to the cell membrane. The chain is UPF0370 protein YE1145 from Yersinia enterocolitica serotype O:8 / biotype 1B (strain NCTC 13174 / 8081).